Consider the following 258-residue polypeptide: L-fucose dehydrogenase (258 aa).

NADP(+)-binding residues include S17, I19, R39, H40, E63, L64, and N90. N94, S140, K141, Q147, and Y153 together coordinate beta-L-fucose. NADP(+) contacts are provided by Y153 and K157. Y153 functions as the Proton acceptor in the catalytic mechanism. Beta-L-fucose-binding residues include A184 and E185. Residues V186 and T188 each contribute to the NADP(+) site.

The protein belongs to the short-chain dehydrogenases/reductases (SDR) family. Homotetramer; dimer of dimers.

It carries out the reaction beta-L-fucose + NADP(+) = L-fucono-1,5-lactone + NADPH + H(+). It catalyses the reaction D-arabinose + NADP(+) = D-arabinono-1,5-lactone + NADPH + H(+). Its pathway is carbohydrate degradation; L-fucose degradation. Functionally, L-fucose dehydrogenase involved in an L-fucose degradation pathway. Catalyzes the oxidation of L-fucose to L-fucono-1,5-lactone. Can also act on D-arabinose, with lower catalytic efficiency, and has weak activity with L-galactose and 4-deoxy-L-fucose. Shows a preference for NADP(+) over NAD(+). The chain is L-fucose dehydrogenase from Burkholderia multivorans (strain ATCC 17616 / 249).